Here is a 559-residue protein sequence, read N- to C-terminus: 3-aminoavenalumate diazotase (559 aa).

Serine 181 is a binding site for Mg(2+). Residues alanine 227, glycine 332, and serine 336 each contribute to the ATP site. Glutamate 337 serves as a coordination point for Mg(2+). ATP-binding residues include aspartate 416 and arginine 437.

Belongs to the ATP-dependent AMP-binding enzyme family. Mg(2+) is required as a cofactor.

The catalysed reaction is 3-aminoavenalumate + nitrite + ATP = 3-diazoavenalumate + AMP + diphosphate + H2O. The enzyme catalyses (E)-3-aminocoumarate + nitrite + ATP + H(+) = (E)-3-diazocoumarate + AMP + diphosphate + H2O. It carries out the reaction 3-amino-4-hydroxybenzoate + nitrite + ATP + H(+) = 3-diazo-4-hydroxybenzoate + AMP + diphosphate + H2O. In terms of biological role, ligase involved in the biosynthesis of avenalumic acid (AVA). Catalyzes the diazotization of 3-aminoavenalumic acid (3-AAA) to 3-diazoavenalumic acid (3-DAA). It can also act on 3-aminocoumaric acid (3-ACA) and 3-amino-4-hydroxybenzoic acid (3,4-AHBA) with lower activity. The chain is 3-aminoavenalumate diazotase from Streptomyces sp.